Reading from the N-terminus, the 62-residue chain is Photosystem II reaction center protein Z (62 aa).

A run of 2 helical transmembrane segments spans residues 8–28 and 41–61; these read ALVALVLVSFVLVVGVPVAYA and WLGSGVWIALVLLVGLLNFFV.

Belongs to the PsbZ family. As to quaternary structure, PSII is composed of 1 copy each of membrane proteins PsbA, PsbB, PsbC, PsbD, PsbE, PsbF, PsbH, PsbI, PsbJ, PsbK, PsbL, PsbM, PsbT, PsbX, PsbY, PsbZ, Psb30/Ycf12, peripheral proteins PsbO, CyanoQ (PsbQ), PsbU, PsbV and a large number of cofactors. It forms dimeric complexes.

It is found in the cellular thylakoid membrane. In terms of biological role, may control the interaction of photosystem II (PSII) cores with the light-harvesting antenna, regulates electron flow through the 2 photosystem reaction centers. PSII is a light-driven water plastoquinone oxidoreductase, using light energy to abstract electrons from H(2)O, generating a proton gradient subsequently used for ATP formation. This is Photosystem II reaction center protein Z from Nostoc sp. (strain PCC 7120 / SAG 25.82 / UTEX 2576).